The sequence spans 831 residues: Sodium/hydrogen exchanger 3 (831 aa).

An N-terminal signal peptide occupies residues 1–28 (MWHPALGPGWKPLLALALALTSLRGVRG). Residues 29–48 (IEEEPNSGGSFQIVTFKWHH) are Extracellular-facing. Residues 49-71 (VQDPYIIALWILVASLAKIVFHL) form a helical membrane-spanning segment. At 72 to 79 (SHKVTSVV) the chain is on the cytoplasmic side. Residues 80–99 (PESALLIVLGLVLGGIVWAA) form a helical membrane-spanning segment. The Extracellular segment spans residues 100–108 (DHIASFTLT). A helical membrane pass occupies residues 109-126 (PTLFFFYLLPPIVLDAGY). Residues 127 to 129 (FMP) lie on the Cytoplasmic side of the membrane. The chain crosses the membrane as a helical span at residues 130 to 165 (NRLFFGNLGTILLYAVIGTIWNAATTGLSLYGVFLS). 3 residues coordinate a 1,2-diacyl-sn-glycero-3-phospho-(1D-myo-inositol): glycine 135, glycine 138, and threonine 139. Residues 166–178 (GLMGELKIGLLDF) are Extracellular-facing. The chain crosses the membrane as a helical span at residues 179–200 (LLFGSLIAAVDPVAVLAVFEEV). The Cytoplasmic portion of the chain corresponds to 201-202 (HV). Residues 203–234 (NEVLFIIVFGESLLNDAVTVVLYNVFESFVTL) traverse the membrane as a helical segment. At 235-241 (GGDAVTG) the chain is on the extracellular side. The chain crosses the membrane as a helical span at residues 242 to 276 (VDCVKGIVSFFVVSLGGTLVGVIFAFLLSLVTRFT). Topologically, residues 277–278 (KH) are cytoplasmic. The chain crosses the membrane as a helical span at residues 279–301 (VRIIEPGFVFVISYLSYLTSEML). At 302–303 (SL) the chain is on the extracellular side. The helical transmembrane segment at 304-320 (SAILAITFCGICCQKYV) threads the bilayer. Topologically, residues 321 to 327 (KANISEQ) are cytoplasmic. Residues 328-356 (SATTVRYTMKMLASGAETIIFMFLGISAV) traverse the membrane as a helical segment. Over 357–364 (DPVIWTWN) the chain is Extracellular. A helical membrane pass occupies residues 365 to 386 (TAFVLLTLVFISVYRAIGVVLQ). At 387 to 399 (TWILNRYRMVQLE) the chain is on the cytoplasmic side. Residue methionine 395 coordinates a 1,2-diacyl-sn-glycero-3-phospho-(1D-myo-inositol). The helical transmembrane segment at 400 to 423 (TIDQVVMSYGGLRGAVAYALVVLL) threads the bilayer. At 424–430 (DEKKVKE) the chain is on the extracellular side. The chain crosses the membrane as a helical span at residues 431–464 (KNLFVSTTLIVVFFTVIFQGLTIKPLVQWLKVKR). Residues 465-831 (SEQREPKLNE…QPASPESTHM (367 aa)) are Cytoplasmic-facing. Glutamine 494, isoleucine 495, and histidine 497 together coordinate a 1,2-diacyl-sn-glycero-3-phospho-(1D-myo-inositol). A phosphoserine mark is found at serine 552 and serine 560. The segment at 573-587 (RPSTVEASVSYFLRE) is interaction with EZR. Positions 588–665 (NVSAVCLDMQ…RKRLESFKSA (78 aa)) are interaction with NHERF4. The interval 589–693 (VSAVCLDMQS…AQKRRNSSIP (105 aa)) is interaction with AHCYL1. Serine 590 and serine 605 each carry phosphoserine. Serine 661 carries the post-translational modification Phosphoserine; by SGK1. Phosphoserine is present on residues serine 716, serine 807, and serine 810. Residues 808 to 831 (VDSFLQADGPEEQLQPASPESTHM) are disordered. Over residues 822-831 (QPASPESTHM) the composition is skewed to polar residues.

The protein belongs to the monovalent cation:p,roton antiporter 1 (CPA1) transporter (TC 2.A.36) family. As to quaternary structure, homodimer. Found in the forms of complex and dynamic macromolecular complexes. Binds NHERF1 and NHERF2. Interacts with NHERF4 and interactions decrease in response to elevated calcium ion levels. Interacts with PDZK1 (via C-terminal PDZ domain). Interacts with CHP1; this interaction increases trafficking and activity at the plasma membrane of SLC9A3. Interacts with CHP2 and SHANK2. Interacts with AHCYL1; the interaction is required for SLC9A3 activity. Interacts with EZR; interaction targets SLC9A3 to the apical membrane. Interacts with SNX27 (via PDZ domains); directs SLC9A3 membrane insertion from early endosomes to the plasma membrane. Phosphorylated by PRKACA at Ser-552 and Ser-605, which inhibits activity. Phosphorylation of Ser-605 is essential for cAMP-mediated inhibition of SLC9A3. Phosphorylation at Ser-661 by SGK1 is associated with increased abundance at the cell membrane. Phosphorylation at Ser-716 by CSNK2A1 regulates SLC9A3 activity through the formation of multiple signaling complexes. Most abundant in colon and small intestine, followed by kidney and stomach. In kidney, expressed in proximal tubules and outer medulla (at protein level).

It is found in the apical cell membrane. It localises to the cell membrane. The protein localises to the recycling endosome membrane. Its subcellular location is the early endosome membrane. The catalysed reaction is Na(+)(in) + H(+)(out) = Na(+)(out) + H(+)(in). Its activity is regulated as follows. Seems to switch between active and inactive modes in response to various stimuli. Activated directly or indirectly by membrane phosphatidylinositol (PIs). Regulated by a variety of auxiliary proteins, which facilitate the maturation, cell surface expression and function of the transporter. Inhibited specifically by the drug tenapanor. In terms of biological role, plasma membrane Na(+)/H(+) antiporter. Exchanges intracellular H(+) ions for extracellular Na(+) in 1:1 stoichiometry, playing a key role in salt and fluid absorption and pH homeostasis. Major apical Na(+)/H(+) exchanger in kidney and intestine playing an important role in renal and intestine Na(+) absorption and blood pressure regulation. The chain is Sodium/hydrogen exchanger 3 (Slc9a3) from Rattus norvegicus (Rat).